The sequence spans 969 residues: RNA polymerase-associated protein RapA (969 aa).

The region spanning 162 to 339 (EVGQRVAPRV…FARLALLDAD (178 aa)) is the Helicase ATP-binding domain. Residue 175–182 (DEVGLGKT) coordinates ATP. Positions 285–288 (DEAH) match the DEAH box motif. In terms of domain architecture, Helicase C-terminal spans 492–663 (RIEWLITFLK…IFLKNPQAVG (172 aa)).

This sequence belongs to the SNF2/RAD54 helicase family. RapA subfamily. In terms of assembly, interacts with the RNAP. Has a higher affinity for the core RNAP than for the holoenzyme. Its ATPase activity is stimulated by binding to RNAP.

Its function is as follows. Transcription regulator that activates transcription by stimulating RNA polymerase (RNAP) recycling in case of stress conditions such as supercoiled DNA or high salt concentrations. Probably acts by releasing the RNAP, when it is trapped or immobilized on tightly supercoiled DNA. Does not activate transcription on linear DNA. Probably not involved in DNA repair. The protein is RNA polymerase-associated protein RapA of Actinobacillus pleuropneumoniae serotype 3 (strain JL03).